A 421-amino-acid chain; its full sequence is Nuclear envelope integral membrane protein 2 (421 aa).

Positions 1 to 22 are cleaved as a signal peptide; sequence MPPGSWWLVLWLPPLATLPAGA. The next 5 membrane-spanning stretches (helical) occupy residues 147-167, 175-195, 206-226, 232-252, and 279-299; these read NVVD…FFYA, VFYY…FVLL, TFGA…CQLM, LWCG…LCSF, and LVLV…MILL.

The protein belongs to the NEMP family.

It is found in the nucleus inner membrane. In Rattus norvegicus (Rat), this protein is Nuclear envelope integral membrane protein 2 (Nemp2).